The chain runs to 205 residues: Holliday junction branch migration complex subunit RuvA (205 aa).

A domain I region spans residues 1-64; sequence MIGRIRGLLI…EDAQLLYGFI (64 aa). The segment at 65 to 143 is domain II; it reads SKQERSLFRL…SLMEASVGSE (79 aa). Residues 144 to 156 form a flexible linker region; the sequence is REFMLQSNYTAPE. Residues 157 to 205 are domain III; that stretch reads AVNTAEEDAIAALLSLGYKPAQASKAVSSVYTDGMSSETLIKSALKSML.

Belongs to the RuvA family. As to quaternary structure, homotetramer. Forms an RuvA(8)-RuvB(12)-Holliday junction (HJ) complex. HJ DNA is sandwiched between 2 RuvA tetramers; dsDNA enters through RuvA and exits via RuvB. An RuvB hexamer assembles on each DNA strand where it exits the tetramer. Each RuvB hexamer is contacted by two RuvA subunits (via domain III) on 2 adjacent RuvB subunits; this complex drives branch migration. In the full resolvosome a probable DNA-RuvA(4)-RuvB(12)-RuvC(2) complex forms which resolves the HJ.

It is found in the cytoplasm. The RuvA-RuvB-RuvC complex processes Holliday junction (HJ) DNA during genetic recombination and DNA repair, while the RuvA-RuvB complex plays an important role in the rescue of blocked DNA replication forks via replication fork reversal (RFR). RuvA specifically binds to HJ cruciform DNA, conferring on it an open structure. The RuvB hexamer acts as an ATP-dependent pump, pulling dsDNA into and through the RuvAB complex. HJ branch migration allows RuvC to scan DNA until it finds its consensus sequence, where it cleaves and resolves the cruciform DNA. This is Holliday junction branch migration complex subunit RuvA from Shewanella halifaxensis (strain HAW-EB4).